Here is a 67-residue protein sequence, read N- to C-terminus: Probable pilin MJ1400 (67 aa).

Positions 1–13 are excised as a propeptide; the sequence is MKFIMKFIKSNKG. Positions 14–22 match the QXSXEXXXL motif; the sequence is QISLEFSLL.

The N-terminus is cleaved by the prepilin peptidase EppA, which recognizes the class III signal sequence.

It is found in the secreted. The protein localises to the cell surface. Its subcellular location is the fimbrium. This Methanocaldococcus jannaschii (strain ATCC 43067 / DSM 2661 / JAL-1 / JCM 10045 / NBRC 100440) (Methanococcus jannaschii) protein is Probable pilin MJ1400.